The chain runs to 89 residues: UPF0237 protein DIP1286 (89 aa).

The ACT domain occupies 4 to 78 (IISVTGADHT…KDQNLVIRIQ (75 aa)).

This sequence belongs to the UPF0237 family.

The sequence is that of UPF0237 protein DIP1286 from Corynebacterium diphtheriae (strain ATCC 700971 / NCTC 13129 / Biotype gravis).